The primary structure comprises 60 residues: Potassium channel toxin alpha-KTx 29.3 (60 aa).

The N-terminal stretch at 1-28 (MKSVCGVLIILVVLTTMLSISTFSTVGA) is a signal peptide. Disulfide bonds link Cys32-Cys51, Cys40-Cys56, and Cys44-Cys58.

Belongs to the short scorpion toxin superfamily. Potassium channel inhibitor family. Alpha-KTx 29 subfamily. In terms of tissue distribution, expressed by the venom gland.

It is found in the secreted. Weakly inhibits the Kv1.3/KCNA3 channel (1 uM of thetoxin inhibits currents by 13.2%) and Kv7.1/KCNQ1 channel (10 uM of the toxin inhibits currents by 27.7%). The polypeptide is Potassium channel toxin alpha-KTx 29.3 (Lychas mucronatus (Chinese swimming scorpion)).